The sequence spans 627 residues: uncharacterized protein (627 aa).

In terms of domain architecture, WH1 spans 21–136 (GISASDKILS…NSVCKRQTRS (116 aa)). A disordered region spans residues 310 to 347 (RGSLSTPRIPTHRDSYRSATKPDTVPKQTPPPTHNSYV).

This is an uncharacterized protein from Caenorhabditis elegans.